A 574-amino-acid chain; its full sequence is Protein SIX6OS1 (574 aa).

Residues 259 to 313 (KDEQVSNRSSQNSQLLLPCESQKFVRNMNSSEARVTDKKEESSANQSKFVRSDVR) form a disordered region. The segment covering 264-275 (SNRSSQNSQLLL) has biased composition (low complexity). Thr-427 carries the post-translational modification Phosphothreonine. A Phosphoserine modification is found at Ser-430. A disordered region spans residues 549–574 (QDPSTMTSSSSKDFSSSQNKTQFMFF). Residues 552–565 (STMTSSSSKDFSSS) are compositionally biased toward low complexity.

Interacts with SYCE1. Interacts with proteasome subunit PSMA8; to participate in meiosis progression during spermatogenesis. In terms of tissue distribution, most abundantly expressed in testis. Also expressed in retina and skeletal muscle.

It localises to the chromosome. Meiotic protein that localizes to the central element of the synaptonemal complex and is required for chromosome synapsis during meiotic recombination. Required for the appropriate processing of intermediate recombination nodules before crossover formation. This is Protein SIX6OS1 (Six6os1) from Mus musculus (Mouse).